An 89-amino-acid chain; its full sequence is Cell division topological specificity factor (89 aa).

It belongs to the MinE family.

Prevents the cell division inhibition by proteins MinC and MinD at internal division sites while permitting inhibition at polar sites. This ensures cell division at the proper site by restricting the formation of a division septum at the midpoint of the long axis of the cell. In Laribacter hongkongensis (strain HLHK9), this protein is Cell division topological specificity factor.